The chain runs to 651 residues: Forkhead box protein K2 (651 aa).

A compositionally biased stretch (low complexity) spans 1-13; sequence MAAAAALSGAGAP. Residues 1–29 are disordered; sequence MAAAAALSGAGAPPAGGGAGGGGSPPGGW. The segment covering 14–26 has biased composition (gly residues); sequence PAGGGAGGGGSPP. S24 carries the phosphoserine modification. The FHA domain maps to 48 to 119; sequence VTIGRNSSQG…NGVFVDGVFQ (72 aa). The segment at 120–162 is required for interaction with DVL2 and SUDS3; sequence RRGAPPLQLPRVCTFRFPSTNIKITFTALSSEKREKQEAPESP. Position 135 is an omega-N-methylarginine (R135). Disordered stretches follow at residues 150 to 171 and 194 to 251; these read SEKR…PHIS and TISA…SKPP. Glycyl lysine isopeptide (Lys-Gly) (interchain with G-Cter in SUMO2) cross-links involve residues K152 and K155. A compositionally biased stretch (polar residues) spans 194 to 203; the sequence is TISAANSCPS. S230 carries the post-translational modification Phosphoserine. Over residues 233–249 the composition is skewed to basic and acidic residues; sequence ENEKEASGGDSPKDDSK. A DNA-binding region (fork-head) is located at residues 249 to 344; it reads KPPYSYAQLI…EQAFRKRRPR (96 aa). Residues 291–309 form a DNA-binding; major groove region; it reads KGWQNSIRHNLSLNRYFIK. Mg(2+) is bound by residues L301, S302, N304, and F307. DNA-binding; minor groove stretches follow at residues 319–323 and 339–344; these read KGSFW and RKRRPR. A disordered region spans residues 350-399; that stretch reads RTPLGPLSSRSAPASPNHAGVLSAHSSGAQTPESLSREGSPAPLEPEPGA. S364 is modified (phosphoserine). Residues 373–383 show a composition bias toward polar residues; that stretch reads AHSSGAQTPES. S389, S415, and S419 each carry phosphoserine. A Glycyl lysine isopeptide (Lys-Gly) (interchain with G-Cter in SUMO2) cross-link involves residue K518. The residue at position 590 (S590) is a Phosphoserine. Residues 601-614 show a composition bias toward polar residues; the sequence is ASASLPTKRQNGDQ. The segment at 601–623 is disordered; sequence ASASLPTKRQNGDQAEQPELKRV. A Glycyl lysine isopeptide (Lys-Gly) (interchain with G-Cter in SUMO2) cross-link involves residue K624.

As to quaternary structure, component of SIN3A-, but not SIN3B-, containing multiprotein complexes. Interacts with DVL1, DVL2 (when phosphorylated) and DVL3; the interaction induces DVL2 nuclear translocation. Interacts with SUDS3. Interacts with BAP1 (when phosphorylated); leading to recruit the PR-DUB complex and repress FOXK2 target genes. Accessory component of the polycomb repressive deubiquitinase (PR-DUB) complex, at least composed of BAP1, one of ASXL1, ASXL2 or (probably) ASXL3 and one of MBD5 or MBD6. The PR-DUB core associates with a number of accessory proteins, including FOXK1, FOXK2, KDM1B, HCFC1 and OGT. In terms of processing, hyperphosphorylated during mitosis by CDK1 and, to a lower extent, CDK2. Phosphorylation at Ser-364 and Ser-419 affects stability by promoting degradation. In terms of tissue distribution, expressed in a wide range of adult brain regions, namely the piriform cortex, the major islands of Calleja and cells lining the lateral ventricles, the bed nucleus of stria terminalis, the paraventricular thalamic nucleus, habenula and all structures of the hippocampus. Also present in the hypothalamus, cerebral cortex and in the Purkinje cell layer in the cerebellum. Additionally expressed in dopamine neurons of the substantia and more sparsely in the ventral tegmental area.

It localises to the nucleus. Its subcellular location is the cytoplasm. In terms of biological role, transcriptional regulator involved in different processes such as glucose metabolism, aerobic glycolysis and autophagy. Recognizes and binds the forkhead DNA sequence motif (5'-GTAAACA-3') and can both act as a transcription activator or repressor, depending on the context. Together with FOXK1, acts as a key regulator of metabolic reprogramming towards aerobic glycolysis, a process in which glucose is converted to lactate in the presence of oxygen. Acts by promoting expression of enzymes for glycolysis (such as hexokinase-2 (HK2), phosphofructokinase, pyruvate kinase (PKLR) and lactate dehydrogenase), while suppressing further oxidation of pyruvate in the mitochondria by up-regulating pyruvate dehydrogenase kinases PDK1 and PDK4. Probably plays a role in gluconeogenesis during overnight fasting, when lactate from white adipose tissue and muscle is the main substrate. Together with FOXK1, acts as a negative regulator of autophagy in skeletal muscle: in response to starvation, enters the nucleus, binds the promoters of autophagy genes and represses their expression, preventing proteolysis of skeletal muscle proteins. In addition to the 5'-GTAAACA-3' DNA motif, also binds the 5'-TGANTCA-3' palindromic DNA motif, and co-associates with JUN/AP-1 to activate transcription. Also able to bind to a minimal DNA heteroduplex containing a G/T-mismatch with 5'-TRT[G/T]NB-3' sequence. Binds to NFAT-like motifs (purine-rich) in the IL2 promoter. Positively regulates WNT/beta-catenin signaling by translocating DVL proteins into the nucleus. Accessory component of the polycomb repressive deubiquitinase (PR-DUB) complex; recruits the PR-DUB complex to specific FOXK2-bound genes. The polypeptide is Forkhead box protein K2 (Mus musculus (Mouse)).